We begin with the raw amino-acid sequence, 127 residues long: Fluoride-specific ion channel FluC (127 aa).

Helical transmembrane passes span 4–24 (SILA…FLGL), 36–56 (GTLL…AYFA), 68–88 (LIIT…AEVV), and 99–119 (AAGA…LGLF). Residues Gly-75 and Thr-78 each coordinate Na(+).

Belongs to the fluoride channel Fluc/FEX (TC 1.A.43) family.

The protein resides in the cell inner membrane. The catalysed reaction is fluoride(in) = fluoride(out). Its activity is regulated as follows. Na(+) is not transported, but it plays an essential structural role and its presence is essential for fluoride channel function. In terms of biological role, fluoride-specific ion channel. Important for reducing fluoride concentration in the cell, thus reducing its toxicity. This is Fluoride-specific ion channel FluC from Pseudomonas aeruginosa (strain UCBPP-PA14).